A 68-amino-acid polypeptide reads, in one-letter code: Large ribosomal subunit protein bL35 (68 aa).

This sequence belongs to the bacterial ribosomal protein bL35 family.

The protein is Large ribosomal subunit protein bL35 of Rickettsia canadensis (strain McKiel).